A 209-amino-acid polypeptide reads, in one-letter code: Cytidylyl-2-hydroxypropylphosphonate hydrolase (209 aa).

A divalent metal cation is bound by residues Asn111, Asp127, Glu129, and Asp131. Lys144 serves as the catalytic Proton donor. A divalent metal cation is bound at residue Asp145.

The protein belongs to the FomD family. As to quaternary structure, monomer in solution. Mn(2+) serves as cofactor. The cofactor is Co(2+).

It catalyses the reaction cytidine 5'-({hydroxy[(S)-2-hydroxypropyl]phosphonoyl}phosphate) + H2O = (S)-2-hydroxypropylphosphonate + CMP + H(+). Its pathway is antibiotic biosynthesis; fosfomycin biosynthesis. Hydrolysis of (S)-HPP-CMP is inhibited by CDP. Involved in fosfomycin biosynthesis. Catalyzes the hydrolysis of cytidylyl (S)-2-hydroxypropylphosphonate ((S)-HPP-CMP) to give (S)-2-hydroxypropylphosphonate ((S)-HPP) and CMP. Can also hydrolyze (R)-HPP-CMP and cytidylyl 2-hydroxyethylphosphonate (HEP-CMP), which is a biosynthetic intermediate before C-methylation, but the catalytic efficiency is much higher with (S)-HPP-CMP. The sequence is that of Cytidylyl-2-hydroxypropylphosphonate hydrolase from Streptomyces wedmorensis.